The sequence spans 132 residues: Small ribosomal subunit protein uS8 (132 aa).

Belongs to the universal ribosomal protein uS8 family. Part of the 30S ribosomal subunit. Contacts proteins S5 and S12.

In terms of biological role, one of the primary rRNA binding proteins, it binds directly to 16S rRNA central domain where it helps coordinate assembly of the platform of the 30S subunit. The chain is Small ribosomal subunit protein uS8 from Xylella fastidiosa (strain 9a5c).